A 271-amino-acid polypeptide reads, in one-letter code: Membrane protein insertase YidC 1 (271 aa).

Residues 1-20 form the signal peptide; that stretch reads MKKKLKTFSLILLTGSLLVA. Residue Cys21 is the site of N-palmitoyl cysteine attachment. Cys21 carries the S-diacylglycerol cysteine lipid modification. The next 4 helical transmembrane spans lie at 45-65, 124-144, 163-183, and 201-221; these read IQWL…TLII, YASV…FQAL, PDPY…STWL, and VMPF…VLYW.

Belongs to the OXA1/ALB3/YidC family. Type 2 subfamily.

Its subcellular location is the cell membrane. In terms of biological role, required for the insertion and/or proper folding and/or complex formation of integral membrane proteins into the membrane. Involved in integration of membrane proteins that insert both dependently and independently of the Sec translocase complex, as well as at least some lipoproteins. The sequence is that of Membrane protein insertase YidC 1 from Streptococcus agalactiae serotype III (strain NEM316).